The primary structure comprises 473 residues: Ribosomal RNA small subunit methyltransferase F (473 aa).

S-adenosyl-L-methionine contacts are provided by residues 123 to 129 (AAAPGSK), Glu147, Asp174, and Asp192. The Nucleophile role is filled by Cys245.

The protein belongs to the class I-like SAM-binding methyltransferase superfamily. RsmB/NOP family.

Its subcellular location is the cytoplasm. The enzyme catalyses cytidine(1407) in 16S rRNA + S-adenosyl-L-methionine = 5-methylcytidine(1407) in 16S rRNA + S-adenosyl-L-homocysteine + H(+). Functionally, specifically methylates the cytosine at position 1407 (m5C1407) of 16S rRNA. This Vibrio atlanticus (strain LGP32) (Vibrio splendidus (strain Mel32)) protein is Ribosomal RNA small subunit methyltransferase F.